Consider the following 233-residue polypeptide: Glycerol-3-phosphate acyltransferase 5 (233 aa).

Helical transmembrane passes span Leu-3 to Leu-23, Met-69 to Phe-89, Leu-116 to Phe-136, Val-143 to Ile-163, and Thr-168 to Pro-188.

This sequence belongs to the PlsY family. In terms of assembly, probably interacts with PlsX.

It is found in the cell membrane. It catalyses the reaction an acyl phosphate + sn-glycerol 3-phosphate = a 1-acyl-sn-glycero-3-phosphate + phosphate. It functions in the pathway lipid metabolism; phospholipid metabolism. Its function is as follows. Catalyzes the transfer of an acyl group from acyl-phosphate (acyl-PO(4)) to glycerol-3-phosphate (G3P) to form lysophosphatidic acid (LPA). This enzyme utilizes acyl-phosphate as fatty acyl donor, but not acyl-CoA or acyl-ACP. The protein is Glycerol-3-phosphate acyltransferase 5 of Dehalococcoides mccartyi (strain ATCC BAA-2266 / KCTC 15142 / 195) (Dehalococcoides ethenogenes (strain 195)).